The sequence spans 289 residues: Protease HtpX (289 aa).

2 helical membrane passes run 5–25 and 33–53; these read IVLFAITNLAVLILASIVMSL and MSGLLVMALILGFGGSLISLL. Histidine 140 lines the Zn(2+) pocket. Glutamate 141 is an active-site residue. Histidine 144 is a Zn(2+) binding site. The next 2 membrane-spanning stretches (helical) occupy residues 155 to 175 and 193 to 213; these read LLQGVLNTFVIVLARVVGGFI and GIVLVLELLFGLFATIITMWF. Residue glutamate 218 coordinates Zn(2+).

This sequence belongs to the peptidase M48B family. The cofactor is Zn(2+).

The protein localises to the cell inner membrane. The chain is Protease HtpX from Xylella fastidiosa (strain M12).